Here is a 374-residue protein sequence, read N- to C-terminus: DNA replication and repair protein RecF (374 aa).

30–37 (GENAQGKT) contributes to the ATP binding site.

It belongs to the RecF family.

It is found in the cytoplasm. The RecF protein is involved in DNA metabolism; it is required for DNA replication and normal SOS inducibility. RecF binds preferentially to single-stranded, linear DNA. It also seems to bind ATP. The chain is DNA replication and repair protein RecF from Lactiplantibacillus plantarum (strain ATCC BAA-793 / NCIMB 8826 / WCFS1) (Lactobacillus plantarum).